The sequence spans 328 residues: Phosphate acyltransferase (328 aa).

The protein belongs to the PlsX family. In terms of assembly, homodimer. Probably interacts with PlsY.

The protein localises to the cytoplasm. It carries out the reaction a fatty acyl-[ACP] + phosphate = an acyl phosphate + holo-[ACP]. It functions in the pathway lipid metabolism; phospholipid metabolism. In terms of biological role, catalyzes the reversible formation of acyl-phosphate (acyl-PO(4)) from acyl-[acyl-carrier-protein] (acyl-ACP). This enzyme utilizes acyl-ACP as fatty acyl donor, but not acyl-CoA. This Pseudothermotoga lettingae (strain ATCC BAA-301 / DSM 14385 / NBRC 107922 / TMO) (Thermotoga lettingae) protein is Phosphate acyltransferase.